Consider the following 362-residue polypeptide: Meiotic recombination protein SPO11-1 (362 aa).

The Topo IIA-type catalytic domain maps to 8–142 (SESTNLLQRI…LNVVSVGNGL (135 aa)). Residue Tyr103 is the O-(5'-phospho-DNA)-tyrosine intermediate of the active site. Positions 189 and 241 each coordinate Mg(2+).

Belongs to the TOP6A family. In terms of assembly, heterotetramer of 2 SPO11 (SPO11-1 and/or SPO11-2) and 2 MTOPVIB chains. Interacts with MTOPVIB. May form a heterodimer with SPO11-2. Interacts with PRD1. Does not interact with TOP6B. It depends on Mg(2+) as a cofactor. In terms of tissue distribution, expressed in shoots, young seedlings, flowers and reproductive tissues. Not found in roots or rosette leaves.

The protein localises to the nucleus. The enzyme catalyses ATP-dependent breakage, passage and rejoining of double-stranded DNA.. Component of a topoisomerase 6 complex specifically required for meiotic recombination. Together with MTOPVIB, mediates DNA cleavage that forms the double-strand breaks (DSB) that initiate meiotic recombination. The complex promotes relaxation of negative and positive supercoiled DNA and DNA decatenation through cleavage and ligation cycles. This chain is Meiotic recombination protein SPO11-1, found in Arabidopsis thaliana (Mouse-ear cress).